Here is a 282-residue protein sequence, read N- to C-terminus: Transcription repressor MYB4 (282 aa).

2 consecutive HTH myb-type domains span residues 9-61 (KAHT…INYL) and 62-116 (RPDL…RRKL). 2 consecutive DNA-binding regions (H-T-H motif) follow at residues 37–61 (WRSL…INYL) and 89–112 (WSLI…NTHI). Residues 119–145 (RGIDPTSHRPIQESSASQDSKPTQLEP) form a disordered region. The segment covering 130 to 145 (QESSASQDSKPTQLEP) has biased composition (polar residues).

In terms of assembly, interacts with BHLH12/MYC1 and BHLH42/TT8. Interacts with SAD2. In terms of tissue distribution, widely expressed at low level. Highly expressed in siliques. Weakly expressed in seedlings, young and mature leaves, cauline leaves, stems, flower buds and roots.

It localises to the nucleus. Functionally, transcription repressor involved in regulation of protection against UV. Mediates transcriptional repression of CYP73A5, the gene encoding trans-cinnamate 4-monooxygenase, thereby regulating the accumulation of the UV-protectant compound sinapoylmalate. The chain is Transcription repressor MYB4 (MYB4) from Arabidopsis thaliana (Mouse-ear cress).